We begin with the raw amino-acid sequence, 526 residues long: UDP-N-acetylmuramoyl-L-alanyl-D-glutamate--2,6-diaminopimelate ligase (526 aa).

Residues L48 and S50 each contribute to the UDP-N-acetyl-alpha-D-muramoyl-L-alanyl-D-glutamate site. ATP is bound at residue 136–142; that stretch reads GTSGKTT. Residues 178 to 179, S205, and R213 each bind UDP-N-acetyl-alpha-D-muramoyl-L-alanyl-D-glutamate; that span reads TT. The residue at position 245 (K245) is an N6-carboxylysine. Meso-2,6-diaminopimelate-binding positions include R408, 432–435, G490, and E494; that span reads DNPR. Positions 432–435 match the Meso-diaminopimelate recognition motif motif; sequence DNPR.

This sequence belongs to the MurCDEF family. MurE subfamily. The cofactor is Mg(2+). In terms of processing, carboxylation is probably crucial for Mg(2+) binding and, consequently, for the gamma-phosphate positioning of ATP.

It localises to the cytoplasm. It catalyses the reaction UDP-N-acetyl-alpha-D-muramoyl-L-alanyl-D-glutamate + meso-2,6-diaminopimelate + ATP = UDP-N-acetyl-alpha-D-muramoyl-L-alanyl-gamma-D-glutamyl-meso-2,6-diaminopimelate + ADP + phosphate + H(+). The protein operates within cell wall biogenesis; peptidoglycan biosynthesis. In terms of biological role, catalyzes the addition of meso-diaminopimelic acid to the nucleotide precursor UDP-N-acetylmuramoyl-L-alanyl-D-glutamate (UMAG) in the biosynthesis of bacterial cell-wall peptidoglycan. This is UDP-N-acetylmuramoyl-L-alanyl-D-glutamate--2,6-diaminopimelate ligase from Corynebacterium efficiens (strain DSM 44549 / YS-314 / AJ 12310 / JCM 11189 / NBRC 100395).